The chain runs to 914 residues: Polyribonucleotide nucleotidyltransferase (914 aa).

Positions Tyr407–Pro427 are disordered. The Mg(2+) site is built by Asp521 and Asp527. The KH domain maps to Pro587–Ile646. The region spanning Gly658–Pro730 is the S1 motif domain. Residues Leu727–Asp914 are disordered. 3 stretches are compositionally biased toward basic and acidic residues: residues Ser742–Asp789, Asp797–Gly865, and Arg873–Glu899.

The protein belongs to the polyribonucleotide nucleotidyltransferase family. Mg(2+) is required as a cofactor.

It is found in the cytoplasm. The enzyme catalyses RNA(n+1) + phosphate = RNA(n) + a ribonucleoside 5'-diphosphate. Its function is as follows. Involved in mRNA degradation. Catalyzes the phosphorolysis of single-stranded polyribonucleotides processively in the 3'- to 5'-direction. The chain is Polyribonucleotide nucleotidyltransferase from Bifidobacterium longum subsp. infantis (strain ATCC 15697 / DSM 20088 / JCM 1222 / NCTC 11817 / S12).